Here is a 180-residue protein sequence, read N- to C-terminus: ATP synthase subunit delta (180 aa).

This sequence belongs to the ATPase delta chain family. As to quaternary structure, F-type ATPases have 2 components, F(1) - the catalytic core - and F(0) - the membrane proton channel. F(1) has five subunits: alpha(3), beta(3), gamma(1), delta(1), epsilon(1). F(0) has three main subunits: a(1), b(2) and c(10-14). The alpha and beta chains form an alternating ring which encloses part of the gamma chain. F(1) is attached to F(0) by a central stalk formed by the gamma and epsilon chains, while a peripheral stalk is formed by the delta and b chains.

Its subcellular location is the cell inner membrane. F(1)F(0) ATP synthase produces ATP from ADP in the presence of a proton or sodium gradient. F-type ATPases consist of two structural domains, F(1) containing the extramembraneous catalytic core and F(0) containing the membrane proton channel, linked together by a central stalk and a peripheral stalk. During catalysis, ATP synthesis in the catalytic domain of F(1) is coupled via a rotary mechanism of the central stalk subunits to proton translocation. In terms of biological role, this protein is part of the stalk that links CF(0) to CF(1). It either transmits conformational changes from CF(0) to CF(1) or is implicated in proton conduction. The sequence is that of ATP synthase subunit delta from Parabacteroides distasonis (strain ATCC 8503 / DSM 20701 / CIP 104284 / JCM 5825 / NCTC 11152).